We begin with the raw amino-acid sequence, 245 residues long: 1-(5-phosphoribosyl)-5-[(5-phosphoribosylamino)methylideneamino] imidazole-4-carboxamide isomerase (245 aa).

D7 (proton acceptor) is an active-site residue. Residue D129 is the Proton donor of the active site.

It belongs to the HisA/HisF family.

The protein localises to the cytoplasm. The enzyme catalyses 1-(5-phospho-beta-D-ribosyl)-5-[(5-phospho-beta-D-ribosylamino)methylideneamino]imidazole-4-carboxamide = 5-[(5-phospho-1-deoxy-D-ribulos-1-ylimino)methylamino]-1-(5-phospho-beta-D-ribosyl)imidazole-4-carboxamide. It functions in the pathway amino-acid biosynthesis; L-histidine biosynthesis; L-histidine from 5-phospho-alpha-D-ribose 1-diphosphate: step 4/9. In Shigella flexneri serotype 5b (strain 8401), this protein is 1-(5-phosphoribosyl)-5-[(5-phosphoribosylamino)methylideneamino] imidazole-4-carboxamide isomerase.